A 967-amino-acid polypeptide reads, in one-letter code: Leucine-rich repeat-containing G-protein coupled receptor 6 (967 aa).

The signal sequence occupies residues 1-24 (MPSPPGLRALWLCAALCASRRAGG). Residues 25 to 567 (APQPGPGPTA…LFESWGIRLA (543 aa)) lie on the Extracellular side of the membrane. Residues 26-66 (PQPGPGPTACPAPCHCQEDGIMLSADCSELGLSAVPGDLDP) form the LRRNT domain. N-linked (GlcNAc...) asparagine glycosylation occurs at Asn-77. 15 LRR repeats span residues 91–112 (FLEE…AFSG), 115–136 (SLKI…ALWE), 139–160 (SLQS…SFEG), 163–186 (SLRH…NNLP), 187–208 (ALQA…AFQN), 211–232 (SLVV…SFEG), 235–256 (NLET…IRTL), 258–279 (RLQE…AFMG), 282–303 (LLQT…AFQY), 306–328 (KLHT…KGTT), 329–350 (SLEI…MCQQ), 353–374 (RLRV…HRCQ), 375–396 (KLEE…TFSQ), 399–420 (SLQA…AFST), and 423–443 (SLVK…AGLG). N-linked (GlcNAc...) asparagine glycosylation is present at Asn-208. A helical transmembrane segment spans residues 568 to 588 (VWAIVLLSVLCNGLVLLTVFA). The Cytoplasmic segment spans residues 589 to 598 (GGPVPLPPVK). The chain crosses the membrane as a helical span at residues 599–619 (FVVGAIAGANTLTGISCGLLA). At 620-644 (SVDALTFGQFSEYGARWETGLGCRA) the chain is on the extracellular side. The cysteines at positions 642 and 717 are disulfide-linked. A helical membrane pass occupies residues 645-665 (TGFLAVLGSEASVLLLTLAAV). The Cytoplasmic segment spans residues 666–687 (QCSVSVSCVRAYGKSPSLGSVR). Residues 688-708 (AGVLGCLALAGLAAALPLASV) traverse the membrane as a helical segment. Over 709–727 (GEYGASPLCLPYAPPEGQP) the chain is Extracellular. A helical membrane pass occupies residues 728–748 (AALGFTVALVMMNSFCFLVVA). Residues 749–774 (GAYIKLYCDLPRGDFEAVWDCAMVRH) lie on the Cytoplasmic side of the membrane. A helical membrane pass occupies residues 775 to 795 (VAWLIFADGLLYCPVAFLSFA). Over 796-809 (SMLGLFPVTPEAVK) the chain is Extracellular. The helical transmembrane segment at 810-830 (SVLLVVLPLPACLNPLLYLLF) threads the bilayer. Over 831 to 967 (NPHFRDDLRR…PSGLAFASHV (137 aa)) the chain is Cytoplasmic.

This sequence belongs to the G-protein coupled receptor 1 family.

Its subcellular location is the cell membrane. Its function is as follows. Receptor for R-spondins that potentiates the canonical Wnt signaling pathway and acts as a marker of multipotent stem cells in the epidermis. Upon binding to R-spondins (RSPO1, RSPO2, RSPO3 or RSPO4), associates with phosphorylated LRP6 and frizzled receptors that are activated by extracellular Wnt receptors, triggering the canonical Wnt signaling pathway to increase expression of target genes. In contrast to classical G-protein coupled receptors, does not activate heterotrimeric G-proteins to transduce the signal. May act as a tumor suppressor. The sequence is that of Leucine-rich repeat-containing G-protein coupled receptor 6 (LGR6) from Homo sapiens (Human).